The sequence spans 109 residues: Peptide chaperone MftB (109 aa).

Belongs to the peptide chaperone MftB family.

Its function is as follows. Peptide chaperone involved in the biosynthesis of the enzyme cofactor mycofactocin (MFT). Binds MftA and MftC with high affinity, and is essential for MftC activity on MftA, likely via the formation of a ternary complex. The polypeptide is Peptide chaperone MftB (Mycobacterium tuberculosis (strain ATCC 25618 / H37Rv)).